A 697-amino-acid chain; its full sequence is Histone-lysine N-methyltransferase SETDB2 (697 aa).

The region spanning 172–242 (LKKENPLNLP…DNFSFSTQVQ (71 aa)) is the MBD domain. The 75-residue stretch at 304–378 (KCCSCTDGCL…LCQNRVVQHG (75 aa)) folds into the Pre-SET domain. Zn(2+)-binding residues include Cys-306, Cys-308, Cys-312, Cys-318, Cys-320, Cys-359, Cys-363, Cys-365, and Cys-370. The 292-residue stretch at 381-672 (LRLQVFKTDT…AGTELTWDYN (292 aa)) folds into the SET domain. 391 to 393 (KGW) contacts S-adenosyl-L-methionine. 2 disordered regions span residues 438 to 461 (KEDN…HSDS) and 529 to 605 (VHNS…STSP). Residues 565–581 (SGYVSEESSSSVISGGH) show a composition bias toward low complexity. S-adenosyl-L-methionine-binding positions include Arg-626 and 629–630 (NH). Zn(2+) contacts are provided by Cys-632, Cys-685, Cys-687, and Cys-692.

Belongs to the class V-like SAM-binding methyltransferase superfamily.

It localises to the nucleus. The protein resides in the chromosome. It catalyses the reaction N(6),N(6)-dimethyl-L-lysyl(9)-[histone H3] + S-adenosyl-L-methionine = N(6),N(6),N(6)-trimethyl-L-lysyl(9)-[histone H3] + S-adenosyl-L-homocysteine + H(+). Its function is as follows. Histone methyltransferase involved in left-right axis specification in early development and mitosis. Specifically trimethylates 'Lys-9' of histone H3 (H3K9me3). H3K9me3 represents a specific tag for epigenetic transcriptional repression by recruiting HP1 (CBX1, CBX3 and/or CBX5) proteins to methylated histones. Contributes to H3K9me3 in both the interspersed repetitive elements and centromere-associated repeats. Plays a role in chromosome condensation and segregation during mitosis. This is Histone-lysine N-methyltransferase SETDB2 (setdb2) from Xenopus tropicalis (Western clawed frog).